Consider the following 79-residue polypeptide: MFKYTDRSVRQYIERQQRSAMLEQEQAEKDKKERRKAGLLFFGTIVVLVAVVAVYIVPQSLDAMWHENYEKPAQEAARN.

A coiled-coil region spans residues Arg-15–Arg-35. Residues Ala-37–Val-57 form a helical membrane-spanning segment.

It localises to the host membrane. Its function is as follows. Inhibits host cell division leading to filamentation. Does not prevent host cell growth, DNA synthesis or chromosome segregation. Does not seem to be essential for productive bacterial host infection. This is Inhibitor of host cell division protein from Bacillus subtilis (Bacteriophage SP01).